The primary structure comprises 396 residues: Polygalacturonase (396 aa).

Residues 1 to 22 (MDLKFKVHFALVLLFLAHFGES) form the signal peptide. Asn143, Asn151, Asn174, Asn181, Asn203, and Asn208 each carry an N-linked (GlcNAc...) asparagine glycan. PbH1 repeat units follow at residues 172–198 (CKNL…HVSR) and 199–220 (SSSV…SVGD). The active-site Proton donor is Asp213. Cys215 and Cys232 form a disulfide bridge. His236 is an active-site residue. 3 PbH1 repeats span residues 252-273 (VVGV…RIKT), 282-303 (VNDV…VIDQ), and 316-356 (PSQV…EVGD). 2 N-linked (GlcNAc...) asparagine glycosylation sites follow: Asn259 and Asn294. The tract at residues 364–396 (KEGPAKSSCENIKPSLKGKQNPPVCTASAASSS) is disordered. Cys372 and Cys388 are joined by a disulfide.

This sequence belongs to the glycosyl hydrolase 28 family. Pollen.

It localises to the secreted. The protein resides in the cell wall. The enzyme catalyses (1,4-alpha-D-galacturonosyl)n+m + H2O = (1,4-alpha-D-galacturonosyl)n + (1,4-alpha-D-galacturonosyl)m.. Functionally, may function in depolymerizing pectin during pollen development, germination, and tube growth. The polypeptide is Polygalacturonase (PG1) (Nicotiana tabacum (Common tobacco)).